Here is a 351-residue protein sequence, read N- to C-terminus: L-threonine 3-dehydrogenase (351 aa).

Position 39 (Cys39) interacts with Zn(2+). Active-site charge relay system residues include Thr41 and His44. Positions 64, 65, 94, 97, 100, and 108 each coordinate Zn(2+). NAD(+) contacts are provided by residues Ile176, Asp196, Arg201, 271-273, and 295-296; these read LGI and IY.

This sequence belongs to the zinc-containing alcohol dehydrogenase family. In terms of assembly, homotetramer. Zn(2+) is required as a cofactor.

The protein resides in the cytoplasm. The enzyme catalyses L-threonine + NAD(+) = (2S)-2-amino-3-oxobutanoate + NADH + H(+). Its pathway is amino-acid degradation; L-threonine degradation via oxydo-reductase pathway; glycine from L-threonine: step 1/2. Functionally, catalyzes the NAD(+)-dependent oxidation of L-threonine to 2-amino-3-ketobutyrate. This is L-threonine 3-dehydrogenase from Francisella tularensis subsp. tularensis (strain SCHU S4 / Schu 4).